The following is a 459-amino-acid chain: Protein U54 (459 aa).

The first 20 residues, 1–20, serve as a signal peptide directing secretion; sequence MQPATLQWSSYVLQLRLTTA. Residues asparagine 76, asparagine 100, asparagine 281, asparagine 321, and asparagine 452 are each glycosylated (N-linked (GlcNAc...) asparagine; by host).

Belongs to the herpesviridae UL82 family.

The protein is Protein U54 (U54) of Homo sapiens (Human).